The sequence spans 252 residues: 2-succinyl-6-hydroxy-2,4-cyclohexadiene-1-carboxylate synthase (252 aa).

The protein belongs to the AB hydrolase superfamily. MenH family. In terms of assembly, monomer.

The enzyme catalyses 5-enolpyruvoyl-6-hydroxy-2-succinyl-cyclohex-3-ene-1-carboxylate = (1R,6R)-6-hydroxy-2-succinyl-cyclohexa-2,4-diene-1-carboxylate + pyruvate. It participates in quinol/quinone metabolism; 1,4-dihydroxy-2-naphthoate biosynthesis; 1,4-dihydroxy-2-naphthoate from chorismate: step 3/7. It functions in the pathway quinol/quinone metabolism; menaquinone biosynthesis. Catalyzes a proton abstraction reaction that results in 2,5-elimination of pyruvate from 2-succinyl-5-enolpyruvyl-6-hydroxy-3-cyclohexene-1-carboxylate (SEPHCHC) and the formation of 2-succinyl-6-hydroxy-2,4-cyclohexadiene-1-carboxylate (SHCHC). This is 2-succinyl-6-hydroxy-2,4-cyclohexadiene-1-carboxylate synthase from Escherichia fergusonii (strain ATCC 35469 / DSM 13698 / CCUG 18766 / IAM 14443 / JCM 21226 / LMG 7866 / NBRC 102419 / NCTC 12128 / CDC 0568-73).